We begin with the raw amino-acid sequence, 269 residues long: Cytochrome c oxidase subunit 3 (269 aa).

The next 7 helical transmembrane spans lie at 21–41 (PWPM…GLTM), 45–65 (IGNM…SVFW), 90–110 (GFLL…WAYF), 138–160 (PLLN…HALI), 167–187 (ALSG…CQYI), 205–225 (FYAG…MLII), and 247–267 (ILYC…FYWW).

Belongs to the cytochrome c oxidase subunit 3 family. As to quaternary structure, component of the cytochrome c oxidase (complex IV, CIV), a multisubunit enzyme composed of a catalytic core of 3 subunits and several supernumerary subunits. The complex exists as a monomer or a dimer and forms supercomplexes (SCs) in the inner mitochondrial membrane with ubiquinol-cytochrome c oxidoreductase (cytochrome b-c1 complex, complex III, CIII).

It is found in the mitochondrion inner membrane. The enzyme catalyses 4 Fe(II)-[cytochrome c] + O2 + 8 H(+)(in) = 4 Fe(III)-[cytochrome c] + 2 H2O + 4 H(+)(out). Its function is as follows. Component of the cytochrome c oxidase, the last enzyme in the mitochondrial electron transport chain which drives oxidative phosphorylation. The respiratory chain contains 3 multisubunit complexes succinate dehydrogenase (complex II, CII), ubiquinol-cytochrome c oxidoreductase (cytochrome b-c1 complex, complex III, CIII) and cytochrome c oxidase (complex IV, CIV), that cooperate to transfer electrons derived from NADH and succinate to molecular oxygen, creating an electrochemical gradient over the inner membrane that drives transmembrane transport and the ATP synthase. Cytochrome c oxidase is the component of the respiratory chain that catalyzes the reduction of oxygen to water. Electrons originating from reduced cytochrome c in the intermembrane space (IMS) are transferred via the dinuclear copper A center (CU(A)) of subunit 2 and heme A of subunit 1 to the active site in subunit 1, a binuclear center (BNC) formed by heme A3 and copper B (CU(B)). The BNC reduces molecular oxygen to 2 water molecules using 4 electrons from cytochrome c in the IMS and 4 protons from the mitochondrial matrix. The polypeptide is Cytochrome c oxidase subunit 3 (COX3) (Candida glabrata (strain ATCC 2001 / BCRC 20586 / JCM 3761 / NBRC 0622 / NRRL Y-65 / CBS 138) (Yeast)).